The sequence spans 371 residues: Glutamate 5-kinase (371 aa).

K10 contacts ATP. Residues S50, D137, and N149 each coordinate substrate. ATP contacts are provided by residues 169-170 (SD) and 208-214 (TGGMFTK). The PUA domain occupies 274 to 352 (EGRIYIDDGA…EEIRNILGED (79 aa)).

The protein belongs to the glutamate 5-kinase family.

Its subcellular location is the cytoplasm. The catalysed reaction is L-glutamate + ATP = L-glutamyl 5-phosphate + ADP. Its pathway is amino-acid biosynthesis; L-proline biosynthesis; L-glutamate 5-semialdehyde from L-glutamate: step 1/2. In terms of biological role, catalyzes the transfer of a phosphate group to glutamate to form L-glutamate 5-phosphate. This chain is Glutamate 5-kinase, found in Dictyoglomus turgidum (strain DSM 6724 / Z-1310).